The sequence spans 116 residues: Putative UPF0320 protein YJR162C (116 aa).

It belongs to the UPF0320 family.

This Saccharomyces cerevisiae (strain ATCC 204508 / S288c) (Baker's yeast) protein is Putative UPF0320 protein YJR162C.